Reading from the N-terminus, the 148-residue chain is MKVKIKQIYQFEGASSLPAYSTNGSAGMDLYAAIASPMIIKPHETALVPAGIAISLPYGYEAQIRSRSGLASKFGVIVLNSPGTIDSDYRGELKIIMINLGQKDFQLTPAMRIAQMVIAKYEVVSWELVDDLDETERGKNGFGSSGLK.

Residues 67-69 (RSG), Asn80, 84-86 (TID), and Lys94 each bind substrate.

The protein belongs to the dUTPase family. Mg(2+) is required as a cofactor.

It catalyses the reaction dUTP + H2O = dUMP + diphosphate + H(+). It participates in pyrimidine metabolism; dUMP biosynthesis; dUMP from dCTP (dUTP route): step 2/2. Its function is as follows. This enzyme is involved in nucleotide metabolism: it produces dUMP, the immediate precursor of thymidine nucleotides and it decreases the intracellular concentration of dUTP so that uracil cannot be incorporated into DNA. The chain is Deoxyuridine 5'-triphosphate nucleotidohydrolase from Orientia tsutsugamushi (strain Boryong) (Rickettsia tsutsugamushi).